A 331-amino-acid chain; its full sequence is Phosphoribosylformylglycinamidine cyclo-ligase (331 aa).

It belongs to the AIR synthase family.

The protein resides in the cytoplasm. The catalysed reaction is 2-formamido-N(1)-(5-O-phospho-beta-D-ribosyl)acetamidine + ATP = 5-amino-1-(5-phospho-beta-D-ribosyl)imidazole + ADP + phosphate + H(+). The protein operates within purine metabolism; IMP biosynthesis via de novo pathway; 5-amino-1-(5-phospho-D-ribosyl)imidazole from N(2)-formyl-N(1)-(5-phospho-D-ribosyl)glycinamide: step 2/2. This is Phosphoribosylformylglycinamidine cyclo-ligase from Clostridium botulinum (strain Langeland / NCTC 10281 / Type F).